The chain runs to 513 residues: E3 ubiquitin-protein ligase RNF25 (513 aa).

In terms of domain architecture, RWD spans 9–117; that stretch reads SEIEVLQSIY…ERAKEILTDS (109 aa). 8 residues coordinate Zn(2+): Cys124, Cys127, Cys142, His144, His147, Cys150, Cys187, and Cys190. Residues 124–191 form an RING-type; atypical zinc finger; that stretch reads CVICLYDFKE…ELAVVCPVCR (68 aa). Residues 261–513 form a disordered region; that stretch reads NLSDTPGMTD…EKEFRKEGVL (253 aa). Over residues 271 to 297 the composition is skewed to low complexity; the sequence is SSGAESSQSLPSSSPDSTSTTQTSQNQ. Polar residues-rich tracts occupy residues 345 to 397 and 406 to 423; these read SDKI…QDML and EVSQ…QTIL. Over residues 426–440 the composition is skewed to basic and acidic residues; sequence GHPEREHVGRGDKRG. A compositionally biased stretch (gly residues) spans 482–498; sequence AGRGHRGGGAYRGGGRG. Residues 501–513 are compositionally biased toward basic and acidic residues; sequence QRVEKEFRKEGVL.

The protein belongs to the RNF25 family.

It is found in the cytoplasm. It catalyses the reaction S-ubiquitinyl-[E2 ubiquitin-conjugating enzyme]-L-cysteine + [acceptor protein]-L-lysine = [E2 ubiquitin-conjugating enzyme]-L-cysteine + N(6)-ubiquitinyl-[acceptor protein]-L-lysine.. The protein operates within protein modification; protein ubiquitination. Functionally, E3 ubiquitin-protein ligase that plays a key role in the RNF14-RNF25 translation quality control pathway, a pathway that takes place when a ribosome has stalled during translation, and which promotes ubiquitination and degradation of translation factors on stalled ribosomes. May also acts as a positive regulator of the Wnt signaling. In Danio rerio (Zebrafish), this protein is E3 ubiquitin-protein ligase RNF25.